A 205-amino-acid polypeptide reads, in one-letter code: Putative 3-methyladenine DNA glycosylase (205 aa).

Belongs to the DNA glycosylase MPG family.

The chain is Putative 3-methyladenine DNA glycosylase from Bacillus cereus (strain ATCC 14579 / DSM 31 / CCUG 7414 / JCM 2152 / NBRC 15305 / NCIMB 9373 / NCTC 2599 / NRRL B-3711).